Here is an 81-residue protein sequence, read N- to C-terminus: Putative membrane protein insertion efficiency factor 1 (81 aa).

This sequence belongs to the UPF0161 family.

Its subcellular location is the cell membrane. Could be involved in insertion of integral membrane proteins into the membrane. The polypeptide is Putative membrane protein insertion efficiency factor 1 (Bacillus licheniformis (strain ATCC 14580 / DSM 13 / JCM 2505 / CCUG 7422 / NBRC 12200 / NCIMB 9375 / NCTC 10341 / NRRL NRS-1264 / Gibson 46)).